Consider the following 150-residue polypeptide: UPF0756 membrane protein PMI1560 (150 aa).

Helical transmembrane passes span glycine 16 to isoleucine 36, tyrosine 51 to glycine 71, phenylalanine 82 to alanine 102, and valine 123 to leucine 143.

Belongs to the UPF0756 family.

Its subcellular location is the cell membrane. In Proteus mirabilis (strain HI4320), this protein is UPF0756 membrane protein PMI1560.